The following is a 559-amino-acid chain: Probable alpha-(1-&gt;6)-mannopyranosyltransferase MSMEG_3120/MSMEI_3041 (559 aa).

12 helical membrane passes run phenylalanine 41–valine 61, valine 81–glycine 101, isoleucine 202–tryptophan 222, leucine 247–leucine 267, tryptophan 300–serine 316, leucine 321–glycine 340, isoleucine 355–phenylalanine 375, tryptophan 386–leucine 406, alanine 419–glycine 439, valine 455–alanine 475, proline 480–alanine 500, and leucine 507–leucine 527. The segment covering arginine 535–proline 548 has biased composition (pro residues). Residues arginine 535–proline 559 are disordered.

It belongs to the MptA/B family.

The protein resides in the membrane. Functionally, catalyzes the addition of alpha-(1-&gt;6)-mannose residue. This Mycolicibacterium smegmatis (strain ATCC 700084 / mc(2)155) (Mycobacterium smegmatis) protein is Probable alpha-(1-&gt;6)-mannopyranosyltransferase MSMEG_3120/MSMEI_3041.